We begin with the raw amino-acid sequence, 1170 residues long: Thrombospondin-1 (1170 aa).

Residues 1 to 18 form the signal peptide; sequence MGLAWGLGVLFLMHVCGT. The segment at 47-95 is heparin-binding; that stretch reads RLVKGPDPSSPAFRIEDANLIPPVPDDKFQDLVDAVRAEKGFLLLASLR. The Laminin G-like domain maps to 65 to 270; sequence NLIPPVPDDK…HKTKDLQAIC (206 aa). A disulfide bridge links C171 with C232. Residues N248 and N360 are each glycosylated (N-linked (GlcNAc...) asparagine). The VWFC domain maps to 316–373; sequence PLCYHNGVQYRNNEEWTVDSCTECHCQNSVTICKKVSCPIMPCSNATVPDGECCPRCW. TSP type-1 domains follow at residues 379 to 429, 435 to 490, and 492 to 547; these read DDGW…QECD, DGGW…DACP, and NGGW…QDCP. W385 carries a C-linked (Man) tryptophan glycan. 3 disulfide bridges follow: C391/C423, C395/C428, and C406/C413. An O-linked (Fuc...) serine glycan is attached at S394. C-linked (Man) tryptophan glycosylation is found at W438 and W441. Cystine bridges form between C447–C484, C451–C489, and C462–C474. O-linked (Fuc...) threonine glycosylation occurs at T450. C-linked (Man) tryptophan glycosylation is present at W498. 21 disulfide bridges follow: C504/C541, C508/C546, C519/C531, C551/C562, C556/C572, C575/C586, C592/C608, C599/C617, C620/C644, C650/C663, C657/C676, C678/C689, C705/C713, C718/C738, C754/C774, C777/C797, C813/C833, C836/C856, C874/C894, C910/C930, and C946/C1167. T507 carries O-linked (Fuc...) threonine glycosylation. The segment at 531–1152 is involved in retention in extracellular matrix (ECM); involved in trimer formation; the sequence is CVGDVTENQI…YAGGRLGLFV (622 aa). The region spanning 547–587 is the EGF-like 1 domain; that stretch reads PIDGCLSNPCFAGVKCTSYPDGSWKCGACPPGYSGNGIQCT. An O-linked (Xyl) serine glycan is attached at S553. The EGF-like 2 domain maps to 646 to 690; that stretch reads PRNPCTDGTHDCNKNAKCNYLGHYSDPMYRCECKPGYAGNGIICG. TSP type-3 repeat units lie at residues 691-726, 727-762, 763-785, 786-821, 822-844, 845-882, 883-918, and 919-954; these read EDTD…NSGQ, EDYD…NPAQ, YDYD…NPDQ, ADTD…NVDQ, RDTD…NPDQ, LDSD…NANQ, ADHD…NPDQ, and KDSD…DISE. N708 is a glycosylation site (N-linked (GlcNAc...) asparagine). The tract at residues 839 to 934 is disordered; that stretch reads EHNPDQLDSD…GRGDACKDDF (96 aa). Composition is skewed to basic and acidic residues over residues 840 to 854, 883 to 894, and 917 to 934; these read HNPD…RIGD, ADHDKDGKGDAC, and DQKD…KDDF. A Cell attachment site motif is present at residues 926-928; sequence RGD. The region spanning 958–1170 is the TSP C-terminal domain; the sequence is RRFQMIPLDP…SDLKYECRDP (213 aa). An N-linked (GlcNAc...) asparagine glycan is attached at N1067.

It belongs to the thrombospondin family. Homotrimer; disulfide-linked. Can bind to fibrinogen, fibronectin, laminin, type V collagen and integrins alpha-V/beta-1, alpha-V/beta-3 and alpha-IIb/beta-3. Binds heparin. Interacts (via the C-terminal domain) with CD47. Interacts (via the TSP type I repeats) with CD36; the interaction conveys an antiangiogenic effect. Interacts (via the TSP type I repeats) with HRG; the interaction blocks the antiangiogenic effect of THBS1 with CD36. Interacts with ATF6 (via lumenal domain). Interacts with FN1; this interaction is enhanced by TNFAIP6, which may act as a bridging molecule between FN1 and THBS1. Interacts with SIRPA; the interaction stimulates phosphorylation of SIRPA. As to expression, expressed by platelets (at protein level). Expressed by monocyte-derived immature and mature dendritic cells (at protein level).

Its subcellular location is the secreted. The protein localises to the cell surface. The protein resides in the extracellular space. It localises to the extracellular matrix. It is found in the endoplasmic reticulum. Its subcellular location is the sarcoplasmic reticulum. Functionally, adhesive glycoprotein that mediates cell-to-cell and cell-to-matrix interactions. Multifunctional, involved in inflammation, angiogenesis, wound healing, reactive oxygen species (ROS) signaling, nitrous oxide (NO) signaling, apoptosis, senescence, aging, cellular self-renewal, stemness, and cardiovascular and metabolic homeostasis. Negatively modulates dendritic cell activation and cytokine release, as part of an autocrine feedback loop, contributing to the resolution of inflammation and immune homeostasis. Ligand for receptor CD47. Modulates nitrous oxide (NO) signaling via CD47, hence playing a role as a pressor agent, supporting blood pressure. Plays a role in endothelial cell senescence, acting via CD47, by increasing the abundance and activation of NADPH oxidase NOX1, and so generating excess ROS. Inhibits stem cell self-renewal, acting via CD47 signaling, probably by regulation of the stem cell transcription factors POU5F1/OCT4, SOX2, MYC/c-Myc and KLF4. Negatively modulates wound healing, acting via CD47. Ligand for receptor CD36. Involved in inducing apoptosis in podocytes in response to elevated free fatty acids, acting via CD36. Plays a role in suppressing angiogenesis, acting, depending on context, via CD36 or CD47. Promotes cellular senescence in a TP53-CDKN1A-RB1 signaling-dependent manner. Ligand for immunoglobulin-like cell surface receptor SIRPA. Involved in ROS signaling in non-phagocytic cells, stimulating NADPH oxidase-derived ROS production, acting via interaction with SIRPA. Plays a role in metabolic dysfunction in diet-induced obesity, perhaps acting by exacerbating adipose inflammatory activity; its effects may be mediated, at least in part, through enhanced adipocyte proliferation. Plays a role in ER stress response, via its interaction with the activating transcription factor 6 alpha (ATF6) which produces adaptive ER stress response factors. May be involved in age-related conditions, including metabolic dysregulation, during normal aging. This chain is Thrombospondin-1, found in Homo sapiens (Human).